Reading from the N-terminus, the 141-residue chain is MTRFWIGVVSKEHVLRGVEGGFCQVCHGKKAPLNRMKKGDYLLYYSPKYQLNGQEKLQAFTAVGKILDDTAYQVEMFEGFVPFRRDVSYYQPVKDCPIEQVRQHPQWRQYASQIRYGHFEVSKDFFLYVFEQMKLDSPANQ.

Belongs to the UPF0310 family.

In Streptococcus sanguinis (strain SK36), this protein is UPF0310 protein SSA_0254.